The primary structure comprises 493 residues: Alpha-amylase-related protein (493 aa).

The first 19 residues, 1-19 (MFKLALTLTLCLAGSLSLA), serve as a signal peptide directing secretion. Q20 bears the Pyrrolidone carboxylic acid mark. Cysteines 47 and 103 form a disulfide. The Ca(2+) site is built by N117, Q168, and D177. C156 and C170 are oxidised to a cystine. R205 is a binding site for chloride. The active-site Nucleophile is D207. H211 is a binding site for Ca(2+). The Proton donor role is filled by E244. 2 residues coordinate chloride: N307 and R342. Disulfide bonds link C375/C381, C417/C440, and C447/C459.

This sequence belongs to the glycosyl hydrolase 13 family. In terms of assembly, monomer. Ca(2+) serves as cofactor. The cofactor is chloride.

The protein resides in the secreted. It carries out the reaction Endohydrolysis of (1-&gt;4)-alpha-D-glucosidic linkages in polysaccharides containing three or more (1-&gt;4)-alpha-linked D-glucose units.. The protein is Alpha-amylase-related protein (Amyrel) of Drosophila teissieri (Fruit fly).